A 198-amino-acid chain; its full sequence is Nicotinamidase 3 (198 aa).

Belongs to the isochorismatase family.

It carries out the reaction nicotinamide + H2O = nicotinate + NH4(+). It functions in the pathway cofactor biosynthesis; nicotinate biosynthesis; nicotinate from nicotinamide: step 1/1. Catalyzes the deamidation of nicotinamide, an early step in the NAD(+) salvage pathway. Prevents the accumulation of intracellular nicotinamide, a known inhibitor of poly(ADP-ribose) polymerases (PARP enzymes). This chain is Nicotinamidase 3, found in Arabidopsis thaliana (Mouse-ear cress).